The following is a 147-amino-acid chain: UPF0178 protein CV_1768 (147 aa).

Belongs to the UPF0178 family.

The sequence is that of UPF0178 protein CV_1768 from Chromobacterium violaceum (strain ATCC 12472 / DSM 30191 / JCM 1249 / CCUG 213 / NBRC 12614 / NCIMB 9131 / NCTC 9757 / MK).